Reading from the N-terminus, the 122-residue chain is Large ribosomal subunit protein bL12 (122 aa).

The protein belongs to the bacterial ribosomal protein bL12 family. In terms of assembly, homodimer. Part of the ribosomal stalk of the 50S ribosomal subunit. Forms a multimeric L10(L12)X complex, where L10 forms an elongated spine to which 2 to 4 L12 dimers bind in a sequential fashion. Binds GTP-bound translation factors.

Forms part of the ribosomal stalk which helps the ribosome interact with GTP-bound translation factors. Is thus essential for accurate translation. This is Large ribosomal subunit protein bL12 from Staphylococcus aureus (strain Mu50 / ATCC 700699).